Here is a 461-residue protein sequence, read N- to C-terminus: Protein DVR-1 homolog (461 aa).

Residues 1-30 (MEYSRKTYLDLNIMAKYILILSLFFGPGLS) form the signal peptide. A propeptide spanning residues 31–338 (WDVFYSGDED…QKKGGKRPRK (308 aa)) is cleaved from the precursor. Asn-149 carries N-linked (GlcNAc...) asparagine glycosylation. The interval 317–351 (SHLRRNRRAATRQKKGGKRPRKPDTDNDIASRDSA) is disordered. The span at 318-337 (HLRRNRRAATRQKKGGKRPR) shows a compositional bias: basic residues. Over residues 338–347 (KPDTDNDIAS) the composition is skewed to basic and acidic residues. Cystine bridges form between Cys-360–Cys-426, Cys-389–Cys-458, and Cys-393–Cys-460. Asn-402 is a glycosylation site (N-linked (GlcNAc...) asparagine).

It belongs to the TGF-beta family. Homodimer; disulfide-linked.

The protein localises to the secreted. The sequence is that of Protein DVR-1 homolog (DVR1) from Strongylocentrotus purpuratus (Purple sea urchin).